Consider the following 389-residue polypeptide: MSAPPKENIGLPVSEFVQMNNLACESVGGKVLFATDDCFAPAENLLKKKDPEFKPGLFTEFGKWMDGWETRRKRIPGHDWCIIELGVPGIIHGFEADTRFFTGNYAPRISVQAACLKPEEITFQPRKDKIGTAASIEEYKSADKLKSEKWSHLLQMTELTPGYAESSHSYFNVNSKQRWTHLRLNIYPDGGIARFKVYGIGQRDWSSCKPNDLEDLLSMVNGGVCLGFSDAHYGHPRNLIGIGRACDMGDGWETARRLDRPPVLKADSKGILQVPGFEWAVLKLGHPGLVTHIEIDTNHFKGNSPNSCKIDACALTPTEEEGVKRDERFEIGYNWKPLLSVTQIHPHKRRYVESTSLALHQVISHVKITIAPDGGVSRIRLWGFPRPLP.

It belongs to the allantoicase family.

It catalyses the reaction allantoate + H2O = (S)-ureidoglycolate + urea. Its pathway is nitrogen metabolism; (S)-allantoin degradation; (S)-ureidoglycolate from allantoate (aminidohydrolase route): step 1/1. Its function is as follows. Utilization of purines as secondary nitrogen sources, when primary sources are limiting. This chain is Allantoicase (allc), found in Xenopus tropicalis (Western clawed frog).